A 357-amino-acid polypeptide reads, in one-letter code: Peptide chain release factor 1 (357 aa).

Residue glutamine 234 is modified to N5-methylglutamine.

Belongs to the prokaryotic/mitochondrial release factor family. In terms of processing, methylated by PrmC. Methylation increases the termination efficiency of RF1.

It localises to the cytoplasm. Its function is as follows. Peptide chain release factor 1 directs the termination of translation in response to the peptide chain termination codons UAG and UAA. The protein is Peptide chain release factor 1 of Frankia casuarinae (strain DSM 45818 / CECT 9043 / HFP020203 / CcI3).